Here is a 517-residue protein sequence, read N- to C-terminus: Golgi-associated kinase 1B (517 aa).

Topologically, residues methionine 1 to arginine 36 are cytoplasmic. Residues asparagine 37–glycine 56 traverse the membrane as a helical; Signal-anchor for type II membrane protein segment. Residues arginine 57–glutamate 517 are Extracellular-facing. N-linked (GlcNAc...) asparagine glycans are attached at residues asparagine 98 and asparagine 287.

The protein belongs to the GASK family.

The protein resides in the golgi apparatus membrane. This Mus musculus (Mouse) protein is Golgi-associated kinase 1B.